Here is a 248-residue protein sequence, read N- to C-terminus: ATP synthase subunit a, chloroplastic (248 aa).

The next 5 membrane-spanning stretches (helical) occupy residues 37-57 (GQVLITSWVVIGILLTVAFLG), 96-116 (VPFVGTLFLFIFVSNWSGALV), 135-155 (INTTVALALLTSGAYFYAGFH), 200-220 (LVVAVLVSLVPLVVPIPMMFL), and 221-241 (GLFTSGIQALIFATLAAAYIG).

The protein belongs to the ATPase A chain family. In terms of assembly, F-type ATPases have 2 components, CF(1) - the catalytic core - and CF(0) - the membrane proton channel. CF(1) has five subunits: alpha(3), beta(3), gamma(1), delta(1), epsilon(1). CF(0) has four main subunits: a, b, b' and c.

The protein resides in the plastid. It is found in the chloroplast thylakoid membrane. Its function is as follows. Key component of the proton channel; it plays a direct role in the translocation of protons across the membrane. The sequence is that of ATP synthase subunit a, chloroplastic from Staurastrum punctulatum (Green alga).